Consider the following 507-residue polypeptide: Maturase K (507 aa).

The protein belongs to the intron maturase 2 family. MatK subfamily.

It localises to the plastid. It is found in the chloroplast. Its function is as follows. Usually encoded in the trnK tRNA gene intron. Probably assists in splicing its own and other chloroplast group II introns. The chain is Maturase K from Araucaria heterophylla (Norfolk Island pine).